The primary structure comprises 370 residues: Holliday junction branch migration complex subunit RuvB (370 aa).

Positions 1-53 (MAILSSQKQPLEPEPSKNPQSVQQPGLPPSTPEQGLLTAEVSPEERLSRTDDI) are disordered. Positions 13–214 (PEPSKNPQSV…FGLIQRLRFY (202 aa)) are large ATPase domain (RuvB-L). Basic and acidic residues predominate over residues 43 to 53 (PEERLSRTDDI). Residues I53, R54, G95, K98, T99, T100, 161–163 (EDF), R204, Y214, and R251 each bind ATP. T99 lines the Mg(2+) pocket. The small ATPAse domain (RuvB-S) stretch occupies residues 215-285 (EPEELSQIIL…IASEALQLFN (71 aa)). Residues 288 to 370 (PCGLDWTDRR…TPPDGQLSLL (83 aa)) form a head domain (RuvB-H) region. Residues R343 and R348 each coordinate DNA.

The protein belongs to the RuvB family. Homohexamer. Forms an RuvA(8)-RuvB(12)-Holliday junction (HJ) complex. HJ DNA is sandwiched between 2 RuvA tetramers; dsDNA enters through RuvA and exits via RuvB. An RuvB hexamer assembles on each DNA strand where it exits the tetramer. Each RuvB hexamer is contacted by two RuvA subunits (via domain III) on 2 adjacent RuvB subunits; this complex drives branch migration. In the full resolvosome a probable DNA-RuvA(4)-RuvB(12)-RuvC(2) complex forms which resolves the HJ.

It localises to the cytoplasm. The enzyme catalyses ATP + H2O = ADP + phosphate + H(+). Functionally, the RuvA-RuvB-RuvC complex processes Holliday junction (HJ) DNA during genetic recombination and DNA repair, while the RuvA-RuvB complex plays an important role in the rescue of blocked DNA replication forks via replication fork reversal (RFR). RuvA specifically binds to HJ cruciform DNA, conferring on it an open structure. The RuvB hexamer acts as an ATP-dependent pump, pulling dsDNA into and through the RuvAB complex. RuvB forms 2 homohexamers on either side of HJ DNA bound by 1 or 2 RuvA tetramers; 4 subunits per hexamer contact DNA at a time. Coordinated motions by a converter formed by DNA-disengaged RuvB subunits stimulates ATP hydrolysis and nucleotide exchange. Immobilization of the converter enables RuvB to convert the ATP-contained energy into a lever motion, pulling 2 nucleotides of DNA out of the RuvA tetramer per ATP hydrolyzed, thus driving DNA branch migration. The RuvB motors rotate together with the DNA substrate, which together with the progressing nucleotide cycle form the mechanistic basis for DNA recombination by continuous HJ branch migration. Branch migration allows RuvC to scan DNA until it finds its consensus sequence, where it cleaves and resolves cruciform DNA. In Cyanothece sp. (strain PCC 7425 / ATCC 29141), this protein is Holliday junction branch migration complex subunit RuvB.